The chain runs to 235 residues: Succinate dehydrogenase iron-sulfur subunit (235 aa).

[2Fe-2S] cluster-binding residues include Cys53, Cys58, and Cys73. Residues 133-163 (ERAKLDGLYECILCACCSSSCPSYWWNPDKF) enclose the 4Fe-4S ferredoxin-type domain. [4Fe-4S] cluster-binding residues include Cys143, Cys146, and Cys149. Cys153 is a [3Fe-4S] cluster binding site. Trp158 is a binding site for a ubiquinone. Residues Cys200 and Cys206 each coordinate [3Fe-4S] cluster. Cys210 serves as a coordination point for [4Fe-4S] cluster.

It belongs to the succinate dehydrogenase/fumarate reductase iron-sulfur protein family. Part of an enzyme complex containing four subunits: a flavoprotein, an iron-sulfur protein, cytochrome b-556 and a hydrophobic protein. The cofactor is [2Fe-2S] cluster. [3Fe-4S] cluster serves as cofactor. It depends on [4Fe-4S] cluster as a cofactor.

The catalysed reaction is a quinone + succinate = fumarate + a quinol. It participates in carbohydrate metabolism; tricarboxylic acid cycle; fumarate from succinate (bacterial route): step 1/1. In Coxiella burnetii (strain RSA 493 / Nine Mile phase I), this protein is Succinate dehydrogenase iron-sulfur subunit (sdhB).